A 460-amino-acid chain; its full sequence is Cobyrinate a,c-diamide synthase (460 aa).

Residues 248–440 (KIAVARDAAF…THFHFGSSTK (193 aa)) enclose the GATase cobBQ-type domain. Cys331 serves as the catalytic Nucleophile.

The protein belongs to the CobB/CbiA family. It depends on Mg(2+) as a cofactor.

It catalyses the reaction cob(II)yrinate + 2 L-glutamine + 2 ATP + 2 H2O = cob(II)yrinate a,c diamide + 2 L-glutamate + 2 ADP + 2 phosphate + 2 H(+). It participates in cofactor biosynthesis; adenosylcobalamin biosynthesis; cob(II)yrinate a,c-diamide from sirohydrochlorin (anaerobic route): step 10/10. In terms of biological role, catalyzes the ATP-dependent amidation of the two carboxylate groups at positions a and c of cobyrinate, using either L-glutamine or ammonia as the nitrogen source. This chain is Cobyrinate a,c-diamide synthase, found in Priestia megaterium (Bacillus megaterium).